Here is a 70-residue protein sequence, read N- to C-terminus: Small ribosomal subunit protein bS21 (70 aa).

Belongs to the bacterial ribosomal protein bS21 family.

The chain is Small ribosomal subunit protein bS21 from Polaromonas naphthalenivorans (strain CJ2).